The following is a 310-amino-acid chain: 4-diphosphocytidyl-2-C-methyl-D-erythritol kinase (310 aa).

Lysine 11 is a catalytic residue. An ATP-binding site is contributed by 95–105 (PIGAGLAGGSA). Residue aspartate 137 is part of the active site.

It belongs to the GHMP kinase family. IspE subfamily.

The enzyme catalyses 4-CDP-2-C-methyl-D-erythritol + ATP = 4-CDP-2-C-methyl-D-erythritol 2-phosphate + ADP + H(+). It functions in the pathway isoprenoid biosynthesis; isopentenyl diphosphate biosynthesis via DXP pathway; isopentenyl diphosphate from 1-deoxy-D-xylulose 5-phosphate: step 3/6. In terms of biological role, catalyzes the phosphorylation of the position 2 hydroxy group of 4-diphosphocytidyl-2C-methyl-D-erythritol. In Acaryochloris marina (strain MBIC 11017), this protein is 4-diphosphocytidyl-2-C-methyl-D-erythritol kinase.